The chain runs to 243 residues: Pyridoxine 5'-phosphate synthase (243 aa).

N7 contributes to the 3-amino-2-oxopropyl phosphate binding site. Position 9-10 (9-10 (DH)) interacts with 1-deoxy-D-xylulose 5-phosphate. R18 contributes to the 3-amino-2-oxopropyl phosphate binding site. H43 acts as the Proton acceptor in catalysis. Residues R45 and H50 each coordinate 1-deoxy-D-xylulose 5-phosphate. E70 functions as the Proton acceptor in the catalytic mechanism. T100 provides a ligand contact to 1-deoxy-D-xylulose 5-phosphate. Catalysis depends on H191, which acts as the Proton donor. 3-amino-2-oxopropyl phosphate-binding positions include G192 and 213–214 (GH).

Belongs to the PNP synthase family. As to quaternary structure, homooctamer; tetramer of dimers.

The protein resides in the cytoplasm. The catalysed reaction is 3-amino-2-oxopropyl phosphate + 1-deoxy-D-xylulose 5-phosphate = pyridoxine 5'-phosphate + phosphate + 2 H2O + H(+). It functions in the pathway cofactor biosynthesis; pyridoxine 5'-phosphate biosynthesis; pyridoxine 5'-phosphate from D-erythrose 4-phosphate: step 5/5. Its function is as follows. Catalyzes the complicated ring closure reaction between the two acyclic compounds 1-deoxy-D-xylulose-5-phosphate (DXP) and 3-amino-2-oxopropyl phosphate (1-amino-acetone-3-phosphate or AAP) to form pyridoxine 5'-phosphate (PNP) and inorganic phosphate. The sequence is that of Pyridoxine 5'-phosphate synthase from Magnetococcus marinus (strain ATCC BAA-1437 / JCM 17883 / MC-1).